The chain runs to 87 residues: uncharacterized protein (87 aa).

The next 2 membrane-spanning stretches (helical) occupy residues 25-45 and 53-73; these read LVAA…WLGG and YAFL…LVTF.

The protein localises to the cell membrane. This is an uncharacterized protein from Paracoccus denitrificans.